We begin with the raw amino-acid sequence, 323 residues long: Aldo-keto reductase family 1 member C3 (323 aa).

NADP(+)-binding positions include 20-24 (GFGTY) and D50. Residue Y55 is the Proton donor of the active site. H117 lines the substrate pocket. NADP(+) contacts are provided by residues 166 to 167 (SN), Q190, 216 to 221 (YSALGS), and 270 to 280 (KSYNEQRIREN).

It belongs to the aldo/keto reductase family.

It is found in the cytoplasm. The enzyme catalyses a 3alpha-hydroxysteroid + NADP(+) = a 3-oxosteroid + NADPH + H(+). It catalyses the reaction a 3alpha-hydroxysteroid + NAD(+) = a 3-oxosteroid + NADH + H(+). The catalysed reaction is prostaglandin F2alpha + NADP(+) = prostaglandin D2 + NADPH + H(+). It carries out the reaction testosterone + NAD(+) = androst-4-ene-3,17-dione + NADH + H(+). The enzyme catalyses testosterone + NADP(+) = androst-4-ene-3,17-dione + NADPH + H(+). It catalyses the reaction prostaglandin F2alpha + NADP(+) = prostaglandin H2 + NADPH + H(+). The catalysed reaction is prostaglandin D2 + NADPH + H(+) = 11beta-prostaglandin F2 + NADP(+). It carries out the reaction prostaglandin D2-ethanolamide + NADPH + H(+) = 11beta-prostaglandin F2-ethanolamide + NADP(+). The enzyme catalyses 17beta-estradiol + NADP(+) = estrone + NADPH + H(+). It catalyses the reaction 17beta-estradiol + NAD(+) = estrone + NADH + H(+). The catalysed reaction is (20S)-hydroxypregn-4-en-3-one + NADP(+) = progesterone + NADPH + H(+). It carries out the reaction (20S)-hydroxypregn-4-en-3-one + NAD(+) = progesterone + NADH + H(+). The enzyme catalyses 5alpha-androstane-3alpha,17beta-diol + NADP(+) = 17beta-hydroxy-5alpha-androstan-3-one + NADPH + H(+). It catalyses the reaction 5alpha-androstane-3alpha,17beta-diol + NAD(+) = 17beta-hydroxy-5alpha-androstan-3-one + NADH + H(+). The catalysed reaction is androsterone + NADPH + H(+) = 5alpha-androstane-3alpha,17beta-diol + NADP(+). It carries out the reaction 5alpha-androstane-3alpha,17beta-diol + NAD(+) = androsterone + NADH + H(+). The enzyme catalyses 5alpha-androstane-3beta,17beta-diol + NADP(+) = 17beta-hydroxy-5alpha-androstan-3-one + NADPH + H(+). It catalyses the reaction 9-cis-retinol + NADP(+) = 9-cis-retinal + NADPH + H(+). It functions in the pathway steroid metabolism. Cytosolic aldo-keto reductase that catalyzes the NADH and NADPH-dependent reduction of ketosteroids to hydroxysteroids. Acts as a NAD(P)(H)-dependent 3-, 17- and 20-ketosteroid reductase on the steroid nucleus and side chain and regulates the metabolism of androgens, estrogens and progesterone. Displays the ability to catalyze both oxidation and reduction in vitro, but most probably acts as a reductase in vivo since the oxidase activity measured in vitro is inhibited by physiological concentration of NADPH. Acts preferentially as a 17-ketosteroid reductase and has the highest catalytic efficiency of the AKR1C enzyme for the reduction of delta4-androstenedione to form testosterone. Reduces prostaglandin (PG) D2 to 11beta-prostaglandin F2, progesterone to 20alpha-hydroxyprogesterone and estrone to 17beta-estradiol. Catalyzes the transformation of the potent androgen dihydrotestosterone (DHT) into the less active form, 5-alpha-androstan-3-alpha,17-beta-diol (3-alpha-diol). Also displays retinaldehyde reductase activity toward 9-cis-retinal. This is Aldo-keto reductase family 1 member C3 (AKR1C3) from Pongo abelii (Sumatran orangutan).